Here is a 336-residue protein sequence, read N- to C-terminus: DNA-directed RNA polymerase subunit alpha (336 aa).

Residues 1–232 (MIQKNWQELI…DQLGVFVNFD (232 aa)) form an alpha N-terminal domain (alpha-NTD) region. Residues 248–336 (FNPALLKKVD…DLAKRYEDQY (89 aa)) form an alpha C-terminal domain (alpha-CTD) region.

It belongs to the RNA polymerase alpha chain family. Homodimer. The RNAP catalytic core consists of 2 alpha, 1 beta, 1 beta' and 1 omega subunit. When a sigma factor is associated with the core the holoenzyme is formed, which can initiate transcription.

It carries out the reaction RNA(n) + a ribonucleoside 5'-triphosphate = RNA(n+1) + diphosphate. Functionally, DNA-dependent RNA polymerase catalyzes the transcription of DNA into RNA using the four ribonucleoside triphosphates as substrates. The polypeptide is DNA-directed RNA polymerase subunit alpha (Rhizobium etli (strain CIAT 652)).